The primary structure comprises 752 residues: Complement C2 (752 aa).

Positions 1–20 (MGPLMVLFCLLFVYTGLADS) are cleaved as a signal peptide. Sushi domains are found at residues 22–86 (PSCP…VCKP), 87–146 (VRCP…VCDN), and 149–206 (GHCP…ICRQ). 6 disulfide bridges follow: Cys24–Cys64, Cys51–Cys84, Cys89–Cys131, Cys117–Cys144, Cys151–Cys191, and Cys177–Cys204. N-linked (GlcNAc...) asparagine glycosylation is present at Asn29. N-linked (GlcNAc...) asparagine glycosylation is present at Asn112. The VWFA domain occupies 254–452 (NLYLLLDCSQ…KALHQVFEHM (199 aa)). Residues 260-264 (DCSQS) carry the MIDAS-like motif motif. Ser262 and Ser264 together coordinate Mg(2+). Residues Asn290 and Asn333 are each glycosylated (N-linked (GlcNAc...) asparagine). Thr337 contributes to the Mg(2+) binding site. Disulfide bonds link Cys463–Cys581, Cys492–Cys508, and Cys584–Cys600. The Peptidase S1 domain maps to 464 to 744 (GVGNMSANAS…MQPWLRQHLG (281 aa)). Residues Asn467 and Asn471 are each glycosylated (N-linked (GlcNAc...) asparagine). Catalysis depends on charge relay system residues His507 and Asp561. Asn621 and Asn651 each carry an N-linked (GlcNAc...) asparagine glycan. Intrachain disulfides connect Cys638/Cys665 and Cys675/Cys705. The Charge relay system role is filled by Ser679.

The protein belongs to the peptidase S1 family. Serine protease component of the C3 convertase, also named C4bC2b, composed of the serine protease complement C2b and complement C4b. Serine protease component of the C5 convertase, also named C4bC2bC3b, composed of the serine protease complement C2b, complement C3b, as well as complement C4b. The cofactor is Mg(2+). It depends on Mn(2+) as a cofactor. Cleaved and activated by different proteases depending on the complement pathway to generate complement C2a and serine protease complement C2b chains. Cleaved and activated by C1S following activation by the classical complement system. Cleaved and activated by MASP2 following activation by the lectin complement system. Cleaved and activated by GZMK following activation by the GZMK complement system.

The protein localises to the secreted. The protein resides in the cell surface. It carries out the reaction Selective cleavage of Arg-|-Ser bond in complement component C3 alpha-chain to form C3a and C3b, and Arg-|-Xaa bond in complement component C5 alpha-chain to form C5a and C5b.. In terms of biological role, precursor of the catalytic component of the C3 and C5 convertase complexes, which are part of the complement pathway, a cascade of proteins that leads to phagocytosis and breakdown of pathogens and signaling that strengthens the adaptive immune system. Component C2 is part of the classical, lectin and GZMK complement systems. Its function is as follows. Catalytic component of the complement C3 and C5 convertase complexes. Following complement activation, recruited to the surface of pathogens by complement C4b opsonin to form the C3 convertase, or C3b and C4b opsonins to form the C5 convertase. As part of the C3 convertase, cleaves and activate C3 into C3a anaphylatoxin and C3b opsonin, the next components of the complement pathways. As part of the C5 convertase, cleaves and activate C5 into C5a anaphylatoxin and C5b component of the membrane attack complex. The polypeptide is Complement C2 (Gorilla gorilla gorilla (Western lowland gorilla)).